Reading from the N-terminus, the 180-residue chain is Pituitary tumor-transforming gene 1 protein-interacting protein (180 aa).

A signal peptide spans 1–32 (MAPGVARGPTPYWRLRLGGAALLLLLIPVAAA). Topologically, residues 33–96 (QEPPGAACSQ…RWGVCWVNFE (64 aa)) are extracellular. The region spanning 39–92 (ACSQNTNKTCEECLKNVSCLWCNTNKACLDYPVTSVLPPASLCKLSSARWGVCW) is the PSI domain. N-linked (GlcNAc...) asparagine glycans are attached at residues asparagine 45 and asparagine 54. A helical transmembrane segment spans residues 97–117 (ALIITMSVVGGTLLLGIAICC). Over 118–180 (CCCCRRKRSR…ENPYARFENN (63 aa)) the chain is Cytoplasmic. A coiled-coil region spans residues 130 to 165 (DRSEEKAMREREERRIRQEERRAEMKTRHDEIRKKY). Positions 131–157 (RSEEKAMREREERRIRQEERRAEMKTR) are disordered. Residue tyrosine 174 is modified to Phosphotyrosine.

Interacts with PTTG1. In terms of tissue distribution, ubiquitous.

It is found in the membrane. The protein resides in the cytoplasm. It localises to the nucleus. May facilitate PTTG1 nuclear translocation. The protein is Pituitary tumor-transforming gene 1 protein-interacting protein (PTTG1IP) of Homo sapiens (Human).